The primary structure comprises 185 residues: Ribosome-recycling factor (185 aa).

This sequence belongs to the RRF family.

The protein resides in the cytoplasm. Responsible for the release of ribosomes from messenger RNA at the termination of protein biosynthesis. May increase the efficiency of translation by recycling ribosomes from one round of translation to another. The chain is Ribosome-recycling factor from Trichlorobacter lovleyi (strain ATCC BAA-1151 / DSM 17278 / SZ) (Geobacter lovleyi).